Here is a 395-residue protein sequence, read N- to C-terminus: Lipoyl synthase, mitochondrial (395 aa).

Residues 1-14 (MISLRSISRSPAVQ) constitute a mitochondrion transit peptide. 7 residues coordinate [4Fe-4S] cluster: Cys112, Cys117, Cys123, Cys142, Cys146, Cys149, and Ser357. In terms of domain architecture, Radical SAM core spans 127–346 (KKSEATATIM…RDTALQMGFL (220 aa)).

It belongs to the radical SAM superfamily. Lipoyl synthase family. [4Fe-4S] cluster serves as cofactor.

It localises to the mitochondrion. It carries out the reaction [[Fe-S] cluster scaffold protein carrying a second [4Fe-4S](2+) cluster] + N(6)-octanoyl-L-lysyl-[protein] + 2 oxidized [2Fe-2S]-[ferredoxin] + 2 S-adenosyl-L-methionine + 4 H(+) = [[Fe-S] cluster scaffold protein] + N(6)-[(R)-dihydrolipoyl]-L-lysyl-[protein] + 4 Fe(3+) + 2 hydrogen sulfide + 2 5'-deoxyadenosine + 2 L-methionine + 2 reduced [2Fe-2S]-[ferredoxin]. The protein operates within protein modification; protein lipoylation via endogenous pathway; protein N(6)-(lipoyl)lysine from octanoyl-[acyl-carrier-protein]: step 2/2. Functionally, catalyzes the radical-mediated insertion of two sulfur atoms into the C-6 and C-8 positions of the octanoyl moiety bound to the lipoyl domains of lipoate-dependent enzymes, thereby converting the octanoylated domains into lipoylated derivatives. This Debaryomyces hansenii (strain ATCC 36239 / CBS 767 / BCRC 21394 / JCM 1990 / NBRC 0083 / IGC 2968) (Yeast) protein is Lipoyl synthase, mitochondrial.